A 66-amino-acid polypeptide reads, in one-letter code: uncharacterized protein (66 aa).

It to E.coli YfhJ.

This is an uncharacterized protein from Pseudomonas aeruginosa (strain ATCC 15692 / DSM 22644 / CIP 104116 / JCM 14847 / LMG 12228 / 1C / PRS 101 / PAO1).